The chain runs to 129 residues: Small ribosomal subunit protein uS11 (129 aa).

Belongs to the universal ribosomal protein uS11 family. As to quaternary structure, part of the 30S ribosomal subunit. Interacts with proteins S7 and S18. Binds to IF-3.

Functionally, located on the platform of the 30S subunit, it bridges several disparate RNA helices of the 16S rRNA. Forms part of the Shine-Dalgarno cleft in the 70S ribosome. The protein is Small ribosomal subunit protein uS11 of Agrobacterium fabrum (strain C58 / ATCC 33970) (Agrobacterium tumefaciens (strain C58)).